The following is a 121-amino-acid chain: Probable K(+)/H(+) antiporter subunit G (121 aa).

Helical transmembrane passes span 10–32, 45–67, and 72–94; these read WAAL…GSLG, APTI…CFAV, and WVFH…LMLL.

The protein belongs to the CPA3 antiporters (TC 2.A.63) subunit G family. As to quaternary structure, may form a hetero-oligomeric complex that consists of six subunits: PhaAB, PhaC, PhaD, PhaE, PhaF and PhaG.

The protein localises to the cell membrane. Its function is as follows. Part of a K(+) efflux system which is required for the adaptation of R.meliloti to alkaline pH as well as for the infection process during symbiotic nodule development. The protein is Probable K(+)/H(+) antiporter subunit G (phaG) of Rhizobium meliloti (strain 1021) (Ensifer meliloti).